Here is a 363-residue protein sequence, read N- to C-terminus: Histidinol-phosphate aminotransferase (363 aa).

Lysine 218 is modified (N6-(pyridoxal phosphate)lysine).

It belongs to the class-II pyridoxal-phosphate-dependent aminotransferase family. Histidinol-phosphate aminotransferase subfamily. In terms of assembly, homodimer. The cofactor is pyridoxal 5'-phosphate.

The catalysed reaction is L-histidinol phosphate + 2-oxoglutarate = 3-(imidazol-4-yl)-2-oxopropyl phosphate + L-glutamate. The protein operates within amino-acid biosynthesis; L-histidine biosynthesis; L-histidine from 5-phospho-alpha-D-ribose 1-diphosphate: step 7/9. The sequence is that of Histidinol-phosphate aminotransferase from Xanthomonas euvesicatoria pv. vesicatoria (strain 85-10) (Xanthomonas campestris pv. vesicatoria).